A 188-amino-acid chain; its full sequence is NADH-quinone oxidoreductase subunit I (188 aa).

4Fe-4S ferredoxin-type domains are found at residues 44-74 (LNRY…VEGA) and 90-119 (QVYQ…MTNE). [4Fe-4S] cluster-binding residues include cysteine 54, cysteine 57, cysteine 60, cysteine 64, cysteine 99, cysteine 102, cysteine 105, and cysteine 109. The segment at 167–188 (TGGAAAAAQDESEVDDTAGDRP) is disordered. The span at 176 to 188 (DESEVDDTAGDRP) shows a compositional bias: acidic residues.

This sequence belongs to the complex I 23 kDa subunit family. NDH-1 is composed of 14 different subunits. Subunits NuoA, H, J, K, L, M, N constitute the membrane sector of the complex. The cofactor is [4Fe-4S] cluster.

The protein resides in the cell membrane. It catalyses the reaction a quinone + NADH + 5 H(+)(in) = a quinol + NAD(+) + 4 H(+)(out). Its function is as follows. NDH-1 shuttles electrons from NADH, via FMN and iron-sulfur (Fe-S) centers, to quinones in the respiratory chain. The immediate electron acceptor for the enzyme in this species is believed to be ubiquinone. Couples the redox reaction to proton translocation (for every two electrons transferred, four hydrogen ions are translocated across the cytoplasmic membrane), and thus conserves the redox energy in a proton gradient. The sequence is that of NADH-quinone oxidoreductase subunit I from Rhodococcus jostii (strain RHA1).